Here is a 72-residue protein sequence, read N- to C-terminus: MKKSILFIFLSVLSFSPFAQDAKPAGSSKEKITLESKKCNIVKKNNESSPESMNSSNYCCELCCNPACTGCY.

Positions 1–19 (MKKSILFIFLSVLSFSPFA) are cleaved as a signal peptide. Residues 20–53 (QDAKPAGSSKEKITLESKKCNIVKKNNESSPESM) constitute a propeptide that is removed on maturation. 3 cysteine pairs are disulfide-bonded: cysteine 59–cysteine 64, cysteine 60–cysteine 68, and cysteine 63–cysteine 71.

The protein belongs to the heat-stable enterotoxin family.

It is found in the secreted. Functionally, toxin which activates the particulate form of guanylate cyclase and increases cyclic GMP levels within the host intestinal epithelial cells. This chain is Heat-stable enterotoxin A2 (sta2), found in Escherichia coli.